Here is a 76-residue protein sequence, read N- to C-terminus: Acyl carrier protein (76 aa).

The Carrier domain occupies M1–Q76. Position 36 is an O-(pantetheine 4'-phosphoryl)serine (S36).

The protein belongs to the acyl carrier protein (ACP) family. In terms of processing, 4'-phosphopantetheine is transferred from CoA to a specific serine of apo-ACP by AcpS. This modification is essential for activity because fatty acids are bound in thioester linkage to the sulfhydryl of the prosthetic group.

It localises to the cytoplasm. It participates in lipid metabolism; fatty acid biosynthesis. Functionally, carrier of the growing fatty acid chain in fatty acid biosynthesis. The chain is Acyl carrier protein from Haemophilus influenzae (strain 86-028NP).